Here is a 396-residue protein sequence, read N- to C-terminus: Phosphopentomutase (396 aa).

Positions 14, 286, 291, 327, 328, and 339 each coordinate Mn(2+).

The protein belongs to the phosphopentomutase family. Requires Mn(2+) as cofactor.

The protein localises to the cytoplasm. It catalyses the reaction 2-deoxy-alpha-D-ribose 1-phosphate = 2-deoxy-D-ribose 5-phosphate. The enzyme catalyses alpha-D-ribose 1-phosphate = D-ribose 5-phosphate. It participates in carbohydrate degradation; 2-deoxy-D-ribose 1-phosphate degradation; D-glyceraldehyde 3-phosphate and acetaldehyde from 2-deoxy-alpha-D-ribose 1-phosphate: step 1/2. Functionally, isomerase that catalyzes the conversion of deoxy-ribose 1-phosphate (dRib-1-P) and ribose 1-phosphate (Rib-1-P) to deoxy-ribose 5-phosphate (dRib-5-P) and ribose 5-phosphate (Rib-5-P), respectively. This chain is Phosphopentomutase, found in Staphylococcus carnosus (strain TM300).